We begin with the raw amino-acid sequence, 402 residues long: Flavohemoprotein (402 aa).

The region spanning 1–138 (MLSPEVRALV…LADLLIGRER (138 aa)) is the Globin domain. His-85 is a heme b binding site. Active-site charge relay system residues include Tyr-95 and Glu-137. Residues 149–402 (GGWTGWRAFK…AEVFGTGGVA (254 aa)) are reductase. An FAD-binding FR-type domain is found at 152–261 (TGWRAFKVVR…SPPQGDFTLD (110 aa)). FAD contacts are provided by residues Tyr-190 and 206-209 (RQYS). 274–279 (GVGLTP) contributes to the NADP(+) binding site. 395-398 (VFGT) is a binding site for FAD.

Belongs to the globin family. Two-domain flavohemoproteins subfamily. It in the C-terminal section; belongs to the flavoprotein pyridine nucleotide cytochrome reductase family. The cofactor is heme b. FAD is required as a cofactor.

It carries out the reaction 2 nitric oxide + NADPH + 2 O2 = 2 nitrate + NADP(+) + H(+). It catalyses the reaction 2 nitric oxide + NADH + 2 O2 = 2 nitrate + NAD(+) + H(+). Its function is as follows. Is involved in NO detoxification in an aerobic process, termed nitric oxide dioxygenase (NOD) reaction that utilizes O(2) and NAD(P)H to convert NO to nitrate, which protects the bacterium from various noxious nitrogen compounds. Therefore, plays a central role in the inducible response to nitrosative stress. The sequence is that of Flavohemoprotein from Bordetella bronchiseptica (strain ATCC BAA-588 / NCTC 13252 / RB50) (Alcaligenes bronchisepticus).